A 369-amino-acid chain; its full sequence is UDP-3-O-acylglucosamine N-acyltransferase (369 aa).

His-263 functions as the Proton acceptor in the catalytic mechanism.

It belongs to the transferase hexapeptide repeat family. LpxD subfamily. In terms of assembly, homotrimer.

The catalysed reaction is a UDP-3-O-[(3R)-3-hydroxyacyl]-alpha-D-glucosamine + a (3R)-hydroxyacyl-[ACP] = a UDP-2-N,3-O-bis[(3R)-3-hydroxyacyl]-alpha-D-glucosamine + holo-[ACP] + H(+). It participates in bacterial outer membrane biogenesis; LPS lipid A biosynthesis. Functionally, catalyzes the N-acylation of UDP-3-O-acylglucosamine using 3-hydroxyacyl-ACP as the acyl donor. Is involved in the biosynthesis of lipid A, a phosphorylated glycolipid that anchors the lipopolysaccharide to the outer membrane of the cell. This Burkholderia vietnamiensis (strain G4 / LMG 22486) (Burkholderia cepacia (strain R1808)) protein is UDP-3-O-acylglucosamine N-acyltransferase.